The sequence spans 143 residues: Large ribosomal subunit protein eL28z (143 aa).

It belongs to the eukaryotic ribosomal protein eL28 family. As to quaternary structure, component of the large ribosomal subunit. As to expression, expressed in seedlings, roots, stems, leaves, inflorescences and siliques.

It localises to the cytoplasm. The protein localises to the nucleus. Its subcellular location is the nucleolus. The protein resides in the nucleoplasm. Its function is as follows. Component of the large ribosomal subunit. Essential in leaf polarity establishment, probably having a role for translation in leaf dorsoventral patterning to specify leaf adaxial identity. The polypeptide is Large ribosomal subunit protein eL28z (Arabidopsis thaliana (Mouse-ear cress)).